The chain runs to 388 residues: UPF0496 protein 1 (388 aa).

Residues 1-25 (MGNSSSSGSHRPPRPASSESALPPA) form a disordered region. Residues 198-227 (QAVYRQQLTMLEKLQQRKHRLDKKVRAIKA) adopt a coiled-coil conformation. Helical transmembrane passes span 234 to 254 (IIFA…AAIA) and 257 to 277 (PVAA…GKWI). Positions 344-376 (VEEIKKKLEVFMKSVEDLGEQADRCSRDIRRAR) form a coiled coil.

Belongs to the UPF0496 family.

Its subcellular location is the membrane. The chain is UPF0496 protein 1 from Oryza sativa subsp. japonica (Rice).